Reading from the N-terminus, the 345-residue chain is 4-hydroxythreonine-4-phosphate dehydrogenase (345 aa).

2 residues coordinate substrate: H148 and T149. 3 residues coordinate a divalent metal cation: H182, H227, and H282. Residues K290, N299, and R308 each coordinate substrate.

This sequence belongs to the PdxA family. As to quaternary structure, homodimer. It depends on Zn(2+) as a cofactor. Requires Mg(2+) as cofactor. The cofactor is Co(2+).

It localises to the cytoplasm. It carries out the reaction 4-(phosphooxy)-L-threonine + NAD(+) = 3-amino-2-oxopropyl phosphate + CO2 + NADH. The protein operates within cofactor biosynthesis; pyridoxine 5'-phosphate biosynthesis; pyridoxine 5'-phosphate from D-erythrose 4-phosphate: step 4/5. Its function is as follows. Catalyzes the NAD(P)-dependent oxidation of 4-(phosphooxy)-L-threonine (HTP) into 2-amino-3-oxo-4-(phosphooxy)butyric acid which spontaneously decarboxylates to form 3-amino-2-oxopropyl phosphate (AHAP). In Bradyrhizobium diazoefficiens (strain JCM 10833 / BCRC 13528 / IAM 13628 / NBRC 14792 / USDA 110), this protein is 4-hydroxythreonine-4-phosphate dehydrogenase.